A 308-amino-acid chain; its full sequence is Probable pyridoxal 5'-phosphate synthase subunit pdx-1 (308 aa).

D30 is a D-ribose 5-phosphate binding site. Residue K87 is the Schiff-base intermediate with D-ribose 5-phosphate of the active site. G159 contributes to the D-ribose 5-phosphate binding site. Position 171 (R171) interacts with D-glyceraldehyde 3-phosphate. D-ribose 5-phosphate contacts are provided by residues G224 and 245–246; that span reads GS.

It belongs to the PdxS/SNZ family.

The catalysed reaction is aldehydo-D-ribose 5-phosphate + D-glyceraldehyde 3-phosphate + L-glutamine = pyridoxal 5'-phosphate + L-glutamate + phosphate + 3 H2O + H(+). It participates in cofactor biosynthesis; pyridoxal 5'-phosphate biosynthesis. Its function is as follows. Catalyzes the formation of pyridoxal 5'-phosphate from ribose 5-phosphate (RBP), glyceraldehyde 3-phosphate (G3P) and ammonia. The ammonia is provided by pdx-2. Can also use ribulose 5-phosphate and dihydroxyacetone phosphate as substrates, resulting from enzyme-catalyzed isomerization of RBP and G3P, respectively. Also plays an indirect role in resistance to singlet oxygen-generating photosensitizers. In Neurospora crassa (strain ATCC 24698 / 74-OR23-1A / CBS 708.71 / DSM 1257 / FGSC 987), this protein is Probable pyridoxal 5'-phosphate synthase subunit pdx-1 (pdx-1).